We begin with the raw amino-acid sequence, 617 residues long: ATP-dependent RNA helicase DBP1 (617 aa).

Residues Met-1 to Ser-90 are disordered. Residues Lys-7–Glu-17 show a composition bias toward polar residues. Positions Pro-38–Arg-58 are enriched in basic and acidic residues. The segment covering Gly-79–Ser-90 has biased composition (polar residues). The Q motif motif lies at Leu-154–Lys-182. Residues Ile-185–Leu-374 form the Helicase ATP-binding domain. Residue Ala-198–Thr-205 participates in ATP binding. The DEAD box signature appears at Asp-318 to Asp-321. The Helicase C-terminal domain maps to Asn-385–Ser-545. Residues Ser-542–Trp-617 are disordered. Polar residues predominate over residues Phe-580–Gly-594.

It belongs to the DEAD box helicase family. DDX3/DED1 subfamily.

It is found in the cytoplasm. It catalyses the reaction ATP + H2O = ADP + phosphate + H(+). ATP-binding RNA helicase involved in translation initiation. Remodels RNA in response to ADP and ATP concentrations by facilitating disruption, but also formation of RNA duplexes. Redundant to DED1, may be required in conditions in which DED1 expression is decreased. The sequence is that of ATP-dependent RNA helicase DBP1 (DBP1) from Saccharomyces cerevisiae (strain ATCC 204508 / S288c) (Baker's yeast).